Reading from the N-terminus, the 306-residue chain is Methionyl-tRNA formyltransferase (306 aa).

108–111 is a (6S)-5,6,7,8-tetrahydrofolate binding site; that stretch reads SLLP.

This sequence belongs to the Fmt family.

The enzyme catalyses L-methionyl-tRNA(fMet) + (6R)-10-formyltetrahydrofolate = N-formyl-L-methionyl-tRNA(fMet) + (6S)-5,6,7,8-tetrahydrofolate + H(+). Functionally, attaches a formyl group to the free amino group of methionyl-tRNA(fMet). The formyl group appears to play a dual role in the initiator identity of N-formylmethionyl-tRNA by promoting its recognition by IF2 and preventing the misappropriation of this tRNA by the elongation apparatus. The polypeptide is Methionyl-tRNA formyltransferase (Pseudarthrobacter chlorophenolicus (strain ATCC 700700 / DSM 12829 / CIP 107037 / JCM 12360 / KCTC 9906 / NCIMB 13794 / A6) (Arthrobacter chlorophenolicus)).